Reading from the N-terminus, the 509-residue chain is Dihydrolipoyl dehydrogenase, mitochondrial (509 aa).

Residues 1–35 (MQSWSRVYCSLAKRGHFNRISHGLQGLSAVPLRTY) constitute a mitochondrion transit peptide. K66 carries the N6-acetyllysine; alternate modification. Residue K66 is modified to N6-succinyllysine; alternate. FAD-binding positions include 71–80 (EKNETLGGTC) and K89. A disulfide bond links C80 and C85. K104, K122, K132, and K143 each carry N6-acetyllysine; alternate. K104, K122, K132, and K143 each carry N6-succinyllysine; alternate. FAD is bound at residue G154. 2 positions are modified to N6-succinyllysine: K159 and K166. 183–185 (TGS) contacts FAD. NAD(+)-binding positions include 220-227 (GAGVIGVE) and E243. N6-succinyllysine occurs at positions 273 and 277. V278 serves as a coordination point for NAD(+). 2 positions are modified to phosphoserine: S285 and S297. G314 is an NAD(+) binding site. K346 is subject to N6-acetyllysine. FAD contacts are provided by residues D355 and 361 to 364 (MLAH). The residue at position 410 (K410) is an N6-acetyllysine; alternate. K410 is modified (N6-succinyllysine; alternate). N6-acetyllysine occurs at positions 417 and 420. Position 430 is an N6-succinyllysine (K430). Residue H487 is the Proton acceptor of the active site. S502 is modified (phosphoserine). K505 bears the N6-acetyllysine; alternate mark. An N6-succinyllysine; alternate modification is found at K505.

It belongs to the class-I pyridine nucleotide-disulfide oxidoreductase family. Homodimer. Part of the multimeric pyruvate dehydrogenase complex that contains multiple copies of pyruvate dehydrogenase (subunits PDHA (PDHA1 or PDHA2) and PDHB, E1), dihydrolipoamide acetyltransferase (DLAT, E2) and lipoamide dehydrogenase (DLD, E3). These subunits are bound to an inner core composed of about 48 DLAT and 12 PDHX molecules (by non covalent bonds). The 2-oxoglutarate dehydrogenase complex is composed of OGDH (2-oxoglutarate dehydrogenase; E1), DLST (dihydrolipoamide succinyltransferase; E2), DLD (dihydrolipoamide dehydrogenase; E3) and the assembly factor KGD4. It contains multiple copies of the three enzymatic components (E1, E2 and E3). In the nucleus, the 2-oxoglutarate dehydrogenase complex associates with KAT2A. Interacts with PDHX. It depends on FAD as a cofactor. In terms of processing, tyrosine phosphorylated.

It localises to the mitochondrion matrix. Its subcellular location is the nucleus. The protein resides in the cell projection. The protein localises to the cilium. It is found in the flagellum. It localises to the cytoplasmic vesicle. Its subcellular location is the secretory vesicle. The protein resides in the acrosome. It catalyses the reaction N(6)-[(R)-dihydrolipoyl]-L-lysyl-[protein] + NAD(+) = N(6)-[(R)-lipoyl]-L-lysyl-[protein] + NADH + H(+). Its function is as follows. Lipoamide dehydrogenase is a component of the glycine cleavage system as well as an E3 component of three alpha-ketoacid dehydrogenase complexes (pyruvate-, alpha-ketoglutarate-, and branched-chain amino acid-dehydrogenase complex). The 2-oxoglutarate dehydrogenase complex is mainly active in the mitochondrion. A fraction of the 2-oxoglutarate dehydrogenase complex also localizes in the nucleus and is required for lysine succinylation of histones: associates with KAT2A on chromatin and provides succinyl-CoA to histone succinyltransferase KAT2A. In monomeric form may have additional moonlighting function as serine protease. Involved in the hyperactivation of spermatazoa during capacitation and in the spermatazoal acrosome reaction. The protein is Dihydrolipoyl dehydrogenase, mitochondrial (DLD) of Pongo abelii (Sumatran orangutan).